Reading from the N-terminus, the 221-residue chain is Transmembrane emp24 domain-containing protein 3 (221 aa).

The N-terminal stretch at 1–25 (MVHEAPHASSFQMLLQLLLLLLLRA) is a signal peptide. The Lumenal segment spans residues 28–184 (LRSAELTFEL…RAEDLNSRVS (157 aa)). In terms of domain architecture, GOLD spans 42–124 (KQCFHEEVEQ…HKTVYFDFQV (83 aa)). The residue at position 103 (R103) is a Dimethylated arginine. The helical transmembrane segment at 185 to 205 (YWSVGETIALFVVSFSQVLLL) threads the bilayer. The Cytoplasmic segment spans residues 206–221 (KSFFTEKRPVNRAVHS). A COPII vesicle coat-binding motif is present at residues 208 to 209 (FF). A COPI vesicle coat-binding motif is present at residues 208-221 (FFTEKRPVNRAVHS).

The protein belongs to the EMP24/GP25L family. In terms of assembly, monomer in endoplasmic reticulum, endoplasmic reticulum-Golgi intermediate compartment and cis-Golgi network. Interacts (via C-terminus) with COPG1; the interaction involves dimeric TMED3; however, there are conflicting reports on the interaction. Interacts with GORASP1 and GORASP2.

It is found in the endoplasmic reticulum-Golgi intermediate compartment membrane. Its subcellular location is the golgi apparatus. The protein localises to the cis-Golgi network membrane. It localises to the golgi stack membrane. The protein resides in the endoplasmic reticulum membrane. It is found in the cytoplasmic vesicle. Its subcellular location is the COPI-coated vesicle membrane. Potential role in vesicular protein trafficking, mainly in the early secretory pathway. Contributes to the coupled localization of TMED2 and TMED10 in the cis-Golgi network. In Mus musculus (Mouse), this protein is Transmembrane emp24 domain-containing protein 3 (Tmed3).